The chain runs to 598 residues: Elongation factor 4 (598 aa).

Positions Gln2–Lys184 constitute a tr-type G domain. Residues Asp14 to Thr19 and Asn131 to Asp134 each bind GTP.

It belongs to the TRAFAC class translation factor GTPase superfamily. Classic translation factor GTPase family. LepA subfamily.

The protein resides in the cell inner membrane. It catalyses the reaction GTP + H2O = GDP + phosphate + H(+). Required for accurate and efficient protein synthesis under certain stress conditions. May act as a fidelity factor of the translation reaction, by catalyzing a one-codon backward translocation of tRNAs on improperly translocated ribosomes. Back-translocation proceeds from a post-translocation (POST) complex to a pre-translocation (PRE) complex, thus giving elongation factor G a second chance to translocate the tRNAs correctly. Binds to ribosomes in a GTP-dependent manner. The sequence is that of Elongation factor 4 from Azoarcus sp. (strain BH72).